The sequence spans 391 residues: 3-ketoacyl-CoA thiolase (391 aa).

Residue cysteine 95 is the Acyl-thioester intermediate of the active site. Active-site proton acceptor residues include histidine 347 and cysteine 377.

It belongs to the thiolase-like superfamily. Thiolase family. In terms of assembly, heterotetramer of two alpha chains (FadB) and two beta chains (FadA).

Its subcellular location is the cytoplasm. It catalyses the reaction an acyl-CoA + acetyl-CoA = a 3-oxoacyl-CoA + CoA. It functions in the pathway lipid metabolism; fatty acid beta-oxidation. In terms of biological role, catalyzes the final step of fatty acid oxidation in which acetyl-CoA is released and the CoA ester of a fatty acid two carbons shorter is formed. In Pseudomonas syringae pv. tomato (strain ATCC BAA-871 / DC3000), this protein is 3-ketoacyl-CoA thiolase.